A 561-amino-acid polypeptide reads, in one-letter code: MACPF domain-containing protein CAD1 (561 aa).

Residues 11 to 314 (VPSSEALTTT…PPIEDLQYFL (304 aa)) enclose the MACPF domain. The disordered stretch occupies residues 489-514 (VASSGRLEPGGPSTSSSTEEVSGQSG). A compositionally biased stretch (polar residues) spans 500–513 (PSTSSSTEEVSGQS).

Belongs to the complement C6/C7/C8/C9 (TC 1.C.39) family. As to expression, mainly expressed in the vascular system.

In terms of biological role, negatively controls the salicylic acid (SA)-mediated pathway of programmed cell death in plant immunity. In Arabidopsis thaliana (Mouse-ear cress), this protein is MACPF domain-containing protein CAD1 (CAD1).